The following is a 106-amino-acid chain: PAT complex subunit Asterix (106 aa).

A disordered region spans residues 1–29; sequence MSANNMSDPRRPNKVLRYKPPPSECNPAL. Ser-2 is modified (N-acetylserine). At 2–32 the chain is on the cytoplasmic side; sequence SANNMSDPRRPNKVLRYKPPPSECNPALDDP. Residues 33 to 51 traverse the membrane as a helical segment; that stretch reads TPDYMNLLGMIFSMCGLML. Residue Lys-52 is a topological domain, lumenal. A helical membrane pass occupies residues 53 to 70; sequence LKWCAWVAVYCSFISFAN. Residues 71 to 74 lie on the Cytoplasmic side of the membrane; sequence SRSS. Residues 75 to 95 form a helical membrane-spanning segment; the sequence is EDTKQMMSSFMLSISAVVMSY. The Lumenal segment spans residues 96 to 106; the sequence is LQNPQPMTPPW.

This sequence belongs to the Asterix family. In terms of assembly, component of the PAT complex, composed of WDR83OS/Asterix and CCDC47. The PAT complex is part of the multi-pass translocon (MPT) complex, composed of three subcomplexes, the GEL complex (composed of RAB5IF/OPTI and TMCO1), the BOS complex (composed of NCLN/Nicalin, NOMO1 and TMEM147) and the PAT complex (composed of WDR83OS/Asterix and CCDC47). The MPT complex associates with the SEC61 complex.

It is found in the endoplasmic reticulum membrane. In terms of biological role, component of the multi-pass translocon (MPT) complex that mediates insertion of multi-pass membrane proteins into the lipid bilayer of membranes. The MPT complex takes over after the SEC61 complex: following membrane insertion of the first few transmembrane segments of proteins by the SEC61 complex, the MPT complex occludes the lateral gate of the SEC61 complex to promote insertion of subsequent transmembrane regions. Within the MPT complex, the PAT subcomplex sequesters any highly polar regions in the transmembrane domains away from the non-polar membrane environment until they can be buried in the interior of the fully assembled protein. Within the PAT subcomplex, WDR83OS/Asterix binds to and redirects the substrate to a location behind the SEC61 complex. In Bos taurus (Bovine), this protein is PAT complex subunit Asterix (WDR83OS).